The primary structure comprises 70 residues: ATP synthase subunit c (70 aa).

Transmembrane regions (helical) follow at residues 3–23 (FIAASIAAGIAAFGASIGNGM) and 47–67 (FIGVGLIEAVPILSVVVAFML).

Belongs to the ATPase C chain family. In terms of assembly, F-type ATPases have 2 components, F(1) - the catalytic core - and F(0) - the membrane proton channel. F(1) has five subunits: alpha(3), beta(3), gamma(1), delta(1), epsilon(1). F(0) has three main subunits: a(1), b(2) and c(10-14). The alpha and beta chains form an alternating ring which encloses part of the gamma chain. F(1) is attached to F(0) by a central stalk formed by the gamma and epsilon chains, while a peripheral stalk is formed by the delta and b chains.

The protein resides in the cell membrane. F(1)F(0) ATP synthase produces ATP from ADP in the presence of a proton or sodium gradient. F-type ATPases consist of two structural domains, F(1) containing the extramembraneous catalytic core and F(0) containing the membrane proton channel, linked together by a central stalk and a peripheral stalk. During catalysis, ATP synthesis in the catalytic domain of F(1) is coupled via a rotary mechanism of the central stalk subunits to proton translocation. Its function is as follows. Key component of the F(0) channel; it plays a direct role in translocation across the membrane. A homomeric c-ring of between 10-14 subunits forms the central stalk rotor element with the F(1) delta and epsilon subunits. In Lacticaseibacillus casei (strain BL23) (Lactobacillus casei), this protein is ATP synthase subunit c.